We begin with the raw amino-acid sequence, 421 residues long: Testin (421 aa).

A PET domain is found at 92–199; the sequence is MILTNPVAAK…GDVKLPCEMD (108 aa). A disordered region spans residues 133 to 164; sequence EKQPVAGSEGAQYRKKQLAKQLPAHDQDPSKC. Positions 155–164 are enriched in basic and acidic residues; sequence PAHDQDPSKC. 3 consecutive LIM zinc-binding domains span residues 234–297, 299–359, and 362–421; these read YSCY…CDSE, PRCA…NHAV, and QGCH…KMMS.

This sequence belongs to the prickle / espinas / testin family. In terms of assembly, interacts via LIM domain 1 with ZYX. Interacts (via LIM domain 3) with ENAH and VASP. Interacts with ALKBH4, talin, actin, alpha-actinin, GRIP1 and PXN. Interacts (via LIM domain 2) with ACTL7A (via N-terminus). Heterodimer with ACTL7A; the heterodimer interacts with ENAH to form a heterotrimer.

Its subcellular location is the cytoplasm. The protein resides in the cell junction. It localises to the focal adhesion. Its function is as follows. Scaffold protein that may play a role in cell adhesion, cell spreading and in the reorganization of the actin cytoskeleton. Plays a role in the regulation of cell proliferation. May act as a tumor suppressor. The sequence is that of Testin (TES) from Saimiri boliviensis boliviensis (Bolivian squirrel monkey).